The following is a 496-amino-acid chain: T-cell activation inhibitor, mitochondrial (496 aa).

Positions 404 to 437 (KAQQARENMKRKEELKVIENELIQASTKKFSLEK) form a coiled coil.

The protein resides in the mitochondrion. Its function is as follows. May regulate T-cell apoptosis. The chain is T-cell activation inhibitor, mitochondrial (TCAIM) from Homo sapiens (Human).